The chain runs to 282 residues: Protoheme IX farnesyltransferase (282 aa).

A run of 9 helical transmembrane segments spans residues 13–33, 36–56, 74–96, 101–120, 129–149, 156–176, 207–227, 232–252, and 261–281; these read VAGMVALSCVFGYLLAAGAAG, MVTSAAGTFLLTCACSVFNQI, ASGRLPTTAARAVGMAALLPALI, AGGVRLVLLSAAVLALYNGV, AFSLLAGAVPGALPPVFGWLA, SPEIALLFIVYYLWQVPHFWL, LWYASYMVALLLLPVFPFIAE, IAVCLAGITGLAASGYLLASP, and VSMLFVMLLLVVDRLVTSGII.

This sequence belongs to the UbiA prenyltransferase family. Protoheme IX farnesyltransferase subfamily.

It localises to the cell inner membrane. The catalysed reaction is heme b + (2E,6E)-farnesyl diphosphate + H2O = Fe(II)-heme o + diphosphate. Its pathway is porphyrin-containing compound metabolism; heme O biosynthesis; heme O from protoheme: step 1/1. In terms of biological role, converts heme B (protoheme IX) to heme O by substitution of the vinyl group on carbon 2 of heme B porphyrin ring with a hydroxyethyl farnesyl side group. The chain is Protoheme IX farnesyltransferase from Oleidesulfovibrio alaskensis (strain ATCC BAA-1058 / DSM 17464 / G20) (Desulfovibrio alaskensis).